The chain runs to 197 residues: Xanthine phosphoribosyltransferase (197 aa).

Xanthine contacts are provided by Leu20 and Thr27. Residue 128–132 (ANGQA) coordinates 5-phospho-alpha-D-ribose 1-diphosphate. Lys156 contributes to the xanthine binding site.

Belongs to the purine/pyrimidine phosphoribosyltransferase family. Xpt subfamily. As to quaternary structure, homodimer.

The protein resides in the cytoplasm. The enzyme catalyses XMP + diphosphate = xanthine + 5-phospho-alpha-D-ribose 1-diphosphate. The protein operates within purine metabolism; XMP biosynthesis via salvage pathway; XMP from xanthine: step 1/1. In terms of biological role, converts the preformed base xanthine, a product of nucleic acid breakdown, to xanthosine 5'-monophosphate (XMP), so it can be reused for RNA or DNA synthesis. The sequence is that of Xanthine phosphoribosyltransferase from Lactococcus lactis subsp. cremoris (strain SK11).